The primary structure comprises 126 residues: Holo-[acyl-carrier-protein] synthase (126 aa).

Mg(2+)-binding residues include D9 and E58.

This sequence belongs to the P-Pant transferase superfamily. AcpS family. Requires Mg(2+) as cofactor.

It is found in the cytoplasm. The catalysed reaction is apo-[ACP] + CoA = holo-[ACP] + adenosine 3',5'-bisphosphate + H(+). Functionally, transfers the 4'-phosphopantetheine moiety from coenzyme A to a Ser of acyl-carrier-protein. The sequence is that of Holo-[acyl-carrier-protein] synthase from Escherichia coli O17:K52:H18 (strain UMN026 / ExPEC).